We begin with the raw amino-acid sequence, 318 residues long: Ribose-phosphate pyrophosphokinase 1 (318 aa).

96-101 (RQDKKD) provides a ligand contact to ATP. Positions 128, 130, 139, and 143 each coordinate Mg(2+). His-130 is an ATP binding site. Residues 212–227 (KDRVAILVDDMADTCG) form a binding of phosphoribosylpyrophosphate region.

This sequence belongs to the ribose-phosphate pyrophosphokinase family. In terms of assembly, homodimer. The active form is probably a hexamer composed of 3 homodimers. Mg(2+) is required as a cofactor.

It catalyses the reaction D-ribose 5-phosphate + ATP = 5-phospho-alpha-D-ribose 1-diphosphate + AMP + H(+). It participates in metabolic intermediate biosynthesis; 5-phospho-alpha-D-ribose 1-diphosphate biosynthesis; 5-phospho-alpha-D-ribose 1-diphosphate from D-ribose 5-phosphate (route I): step 1/1. Its activity is regulated as follows. Activated by magnesium and inorganic phosphate. Catalyzes the synthesis of phosphoribosylpyrophosphate (PRPP) that is essential for nucleotide synthesis. The protein is Ribose-phosphate pyrophosphokinase 1 (PRPS1) of Bos taurus (Bovine).